Consider the following 101-residue polypeptide: Apolipoprotein C-II (101 aa).

The signal sequence occupies residues 1-22 (MGTRCLLVLLLVLLVLRCDVQG). A propeptide spans 23-28 (DDMARQ) (removed in mature form). Positions 66–74 (AVDEKIRDM) are lipid binding. Residues 78–101 (STAAVRIYTGILTDQILSMLSGDS) are lipoprotein lipase cofactor.

The protein belongs to the apolipoprotein C2 family. Post-translationally, proapolipoprotein C-II is synthesized as a sialic acid containing glycoprotein which is subsequently desialylated prior to its proteolytic processing. In terms of processing, proapolipoprotein C-II, the major form found in plasma undergoes proteolytic cleavage of its N-terminal hexapeptide to generate the mature form apolipoprotein C-II, which occurs as the minor form in plasma.

Its subcellular location is the secreted. In terms of biological role, component of chylomicrons, very low-density lipoproteins (VLDL), low-density lipoproteins (LDL), and high-density lipoproteins (HDL) in plasma. Plays an important role in lipoprotein metabolism as an activator of lipoprotein lipase, the enzyme which hydrolyzes the triacylglycerols on chylomicrons and VLDL. This chain is Apolipoprotein C-II (APOC2), found in Acinonyx jubatus (Cheetah).